We begin with the raw amino-acid sequence, 100 residues long: Small ribosomal subunit protein uS14c (100 aa).

This sequence belongs to the universal ribosomal protein uS14 family. As to quaternary structure, part of the 30S ribosomal subunit.

It localises to the plastid. In terms of biological role, binds 16S rRNA, required for the assembly of 30S particles. The protein is Small ribosomal subunit protein uS14c of Euglena longa (Euglenophycean alga).